A 670-amino-acid chain; its full sequence is Acetyl-coenzyme A synthetase (670 aa).

CoA is bound by residues 211-214 (RGGK) and threonine 329. ATP-binding positions include 404-406 (GEP), 428-433 (DTYWQT), aspartate 519, and arginine 534. Serine 542 lines the CoA pocket. Arginine 545 is a binding site for ATP. Residue arginine 603 participates in CoA binding.

Belongs to the ATP-dependent AMP-binding enzyme family.

It carries out the reaction acetate + ATP + CoA = acetyl-CoA + AMP + diphosphate. In Emericella nidulans (strain FGSC A4 / ATCC 38163 / CBS 112.46 / NRRL 194 / M139) (Aspergillus nidulans), this protein is Acetyl-coenzyme A synthetase (facA).